Consider the following 483-residue polypeptide: GTPase Der (483 aa).

EngA-type G domains lie at F3–R167 and L212–N387. GTP contacts are provided by residues G9–S16, D56–L60, N119–E122, G218–S225, D265–L269, and N330–D333. Residues R388–D472 enclose the KH-like domain.

Belongs to the TRAFAC class TrmE-Era-EngA-EngB-Septin-like GTPase superfamily. EngA (Der) GTPase family. In terms of assembly, associates with the 50S ribosomal subunit.

GTPase that plays an essential role in the late steps of ribosome biogenesis. The chain is GTPase Der from Brucella anthropi (strain ATCC 49188 / DSM 6882 / CCUG 24695 / JCM 21032 / LMG 3331 / NBRC 15819 / NCTC 12168 / Alc 37) (Ochrobactrum anthropi).